An 897-amino-acid polypeptide reads, in one-letter code: Patched domain-containing protein 1 (897 aa).

The helical transmembrane segment at 25-45 (PVFFLTVPAVLTIIFGSTVLS) threads the bilayer. N-linked (GlcNAc...) asparagine glycosylation is found at Asn132, Asn167, and Asn179. 2 helical membrane-spanning segments follow: residues 271-291 (GVLA…AATI) and 306-326 (GLLG…IFFI). One can recognise an SSD domain in the interval 273 to 433 (LAKSEVLVSL…FSFYGSCLVF (161 aa)). The N-linked (GlcNAc...) asparagine glycan is linked to Asn332. Helical transmembrane passes span 335-355 (LLGI…ELLA), 377-397 (VMVC…MGAS), 414-434 (VAVL…LVFA), and 506-526 (PFVV…CLQI). Asn572 and Asn603 each carry an N-linked (GlcNAc...) asparagine glycan. 3 helical membrane-spanning segments follow: residues 701–721 (PILT…FLVI), 727–747 (FWLI…MTLW), and 754–774 (ISIL…APHL). An N-linked (GlcNAc...) asparagine glycan is attached at Asn803. 2 helical membrane-spanning segments follow: residues 806–826 (CFVI…YTLF) and 831–851 (LTAG…LTFF). Basic residues predominate over residues 856–866 (KRHKKKKRAKR). Positions 856 to 881 (KRHKKKKRAKRKEREREREREREREE) are disordered. Over residues 867 to 881 (KEREREREREREREE) the composition is skewed to basic and acidic residues.

The protein belongs to the patched family.

The protein resides in the cell membrane. Its subcellular location is the cell projection. It localises to the dendritic spine. Its function is as follows. Can bind cholesterol in vitro. The protein is Patched domain-containing protein 1 (ptchd1) of Danio rerio (Zebrafish).